We begin with the raw amino-acid sequence, 227 residues long: Probable proteasome subunit beta type-2 (227 aa).

The propeptide at 1–6 is removed in mature form; sequence MITKTG. Thr7 functions as the Nucleophile in the catalytic mechanism.

It belongs to the peptidase T1B family. In terms of assembly, the 26S proteasome consists of a 20S proteasome core and two 19S regulatory subunits. The 20S proteasome core is composed of 28 subunits that are arranged in four stacked rings, resulting in a barrel-shaped structure. The two end rings are each formed by seven alpha subunits, and the two central rings are each formed by seven beta subunits. The catalytic chamber with the active sites is on the inside of the barrel.

It localises to the cytoplasm. The protein localises to the nucleus. It carries out the reaction Cleavage of peptide bonds with very broad specificity.. Its function is as follows. The proteasome degrades poly-ubiquitinated proteins in the cytoplasm and in the nucleus. It is essential for the regulated turnover of proteins and for the removal of misfolded proteins. The proteasome is a multicatalytic proteinase complex that is characterized by its ability to cleave peptides with Arg, Phe, Tyr, Leu, and Glu adjacent to the leaving group at neutral or slightly basic pH. It has an ATP-dependent proteolytic activity. The sequence is that of Probable proteasome subunit beta type-2 (PUP1) from Encephalitozoon cuniculi (strain GB-M1) (Microsporidian parasite).